The primary structure comprises 251 residues: uncharacterized protein (251 aa).

Belongs to the FAM243 family.

This is an uncharacterized protein from Bos taurus (Bovine).